The sequence spans 112 residues: Large ribosomal subunit protein eL22 (112 aa).

This sequence belongs to the eukaryotic ribosomal protein eL22 family. Component of the large ribosomal subunit.

The protein resides in the cytoplasm. The protein is Large ribosomal subunit protein eL22 (RPL22) of Encephalitozoon cuniculi (strain GB-M1) (Microsporidian parasite).